A 191-amino-acid chain; its full sequence is Holliday junction branch migration complex subunit RuvA (191 aa).

The segment at 1-64 is domain I; that stretch reads MIGRLSGVLL…EDAHILFGFG (64 aa). The tract at residues 65-137 is domain II; it reads TNEERNVFKQ…LKGKLGADLG (73 aa). A flexible linker region spans residues 137-141; sequence GVAGA. The interval 142–191 is domain III; sequence VATDATSDILNALLALGYSDKEAMLALKQVPAGTGVSDGIKLALKSLSKA.

Belongs to the RuvA family. As to quaternary structure, homotetramer. Forms an RuvA(8)-RuvB(12)-Holliday junction (HJ) complex. HJ DNA is sandwiched between 2 RuvA tetramers; dsDNA enters through RuvA and exits via RuvB. An RuvB hexamer assembles on each DNA strand where it exits the tetramer. Each RuvB hexamer is contacted by two RuvA subunits (via domain III) on 2 adjacent RuvB subunits; this complex drives branch migration. In the full resolvosome a probable DNA-RuvA(4)-RuvB(12)-RuvC(2) complex forms which resolves the HJ.

The protein resides in the cytoplasm. Functionally, the RuvA-RuvB-RuvC complex processes Holliday junction (HJ) DNA during genetic recombination and DNA repair, while the RuvA-RuvB complex plays an important role in the rescue of blocked DNA replication forks via replication fork reversal (RFR). RuvA specifically binds to HJ cruciform DNA, conferring on it an open structure. The RuvB hexamer acts as an ATP-dependent pump, pulling dsDNA into and through the RuvAB complex. HJ branch migration allows RuvC to scan DNA until it finds its consensus sequence, where it cleaves and resolves the cruciform DNA. The polypeptide is Holliday junction branch migration complex subunit RuvA (Janthinobacterium sp. (strain Marseille) (Minibacterium massiliensis)).